We begin with the raw amino-acid sequence, 524 residues long: Xanthotoxin 5-hydroxylase CYP82C4 (524 aa).

A helical membrane pass occupies residues 1–21; sequence MDTSLFSLFVPILVFVFIALF. Cysteine 463 serves as a coordination point for heme.

This sequence belongs to the cytochrome P450 family. Requires heme as cofactor. Expressed in both primary and lateral roots under iron-deficient conditions, except in apical root zones, and mostly in the root epidermal layer.

It localises to the membrane. The catalysed reaction is fraxetin + reduced [NADPH--hemoprotein reductase] + O2 = sideretin (reduced form) + oxidized [NADPH--hemoprotein reductase] + H2O + H(+). The enzyme catalyses xanthotoxin + reduced [NADPH--hemoprotein reductase] + O2 = 5-hydroxyxanthotoxin + oxidized [NADPH--hemoprotein reductase] + H2O + 2 H(+). It functions in the pathway phenylpropanoid metabolism. In terms of biological role, can hydroxylate xanthotoxin (8-methoxypsoralen) to form 5-hydroxyxanthotoxin (5-hydroxy-8-methoxypsoralen) in vivo and in vitro. Involved in the early iron deficiency response, possibly through an IDE1-like mediated pathway. Involved in the pathway of sideretin biosynthesis from feruloyl CoA, a redox-active catecholic metabolite exuded by roots in response to iron deficiency in order to facilitate the uptake of iron; this pathway consists in the successive conversion from feruloyl CoA to scopoletin, from scopoletin to fraxetin and from fraxetin to sideretin. Catalyzes the biosynthesis of sideretin via fraxetin hydroxylation. The polypeptide is Xanthotoxin 5-hydroxylase CYP82C4 (Arabidopsis thaliana (Mouse-ear cress)).